A 366-amino-acid polypeptide reads, in one-letter code: ERCC4 domain-containing protein EP364R (366 aa).

An ERCC4 domain is found at 3-101; the sequence is FLVADHREHH…QLYFFVEGPA (99 aa).

This sequence belongs to the asfivirus EP364R family.

Functionally, plays a role in the inhibition of type I interferon signaling pathway. Mechanistically, specifically interacts with 2',3'-cGAMP and cleaves it via its phosphodiesterase activity. In turn, prevents 2',3'-cGAMP interaction with host ER-resident STING1 leading to inhibition of downstream signaling pathway and type I interferon production. The chain is ERCC4 domain-containing protein EP364R from African swine fever virus (isolate Pig/Kenya/KEN-50/1950) (ASFV).